Here is a 250-residue protein sequence, read N- to C-terminus: DNA polymerase sliding clamp (250 aa).

This sequence belongs to the PCNA family. As to quaternary structure, homotrimer. The subunits circularize to form a toroid; DNA passes through its center. Replication factor C (RFC) is required to load the toroid on the DNA.

In terms of biological role, sliding clamp subunit that acts as a moving platform for DNA processing. Responsible for tethering the catalytic subunit of DNA polymerase and other proteins to DNA during high-speed replication. This is DNA polymerase sliding clamp from Methanococcus maripaludis (strain C7 / ATCC BAA-1331).